Reading from the N-terminus, the 396-residue chain is Nucleolar protein 12 (396 aa).

The disordered stretch occupies residues 43–104 (TDKDADGDEK…GKESKKSTKE (62 aa)). Residues 47 to 58 (ADGDEKMEDAAS) show a composition bias toward acidic residues. A compositionally biased stretch (basic residues) spans 64–73 (KKPSKKKLAK). The span at 87-104 (EPEKLVEEGKESKKSTKE) shows a compositional bias: basic and acidic residues. RRM domains follow at residues 112-220 (RTIF…SITH) and 228-312 (RSVF…RCKN). Positions 361 to 396 (TKDDSKPVLKKGKKERSKTGRVTKRSQAFKKSQQKK) are disordered. The segment covering 368-396 (VLKKGKKERSKTGRVTKRSQAFKKSQQKK) has biased composition (basic residues).

The protein belongs to the RRM RBM34 family.

Its subcellular location is the nucleus. The protein localises to the nucleolus. Involved in pre-25S rRNA processing. In Candida glabrata (strain ATCC 2001 / BCRC 20586 / JCM 3761 / NBRC 0622 / NRRL Y-65 / CBS 138) (Yeast), this protein is Nucleolar protein 12 (NOP12).